The sequence spans 2259 residues: Protein Ycf2 (2259 aa).

Residue 1556–1563 participates in ATP binding; it reads GSQETGRS.

Belongs to the Ycf2 family.

It is found in the plastid. It localises to the chloroplast stroma. In terms of biological role, probable ATPase of unknown function. Its presence in a non-photosynthetic plant (Epifagus virginiana) and experiments in tobacco indicate that it has an essential function which is probably not related to photosynthesis. The sequence is that of Protein Ycf2 from Physcomitrium patens (Spreading-leaved earth moss).